The following is a 101-amino-acid chain: MNSIRKLSCFGTGSSIYSGKCLSSTQQKGLPQRTLWTMNGLIWAYWMMVLQLIIIPKDSGCSRSTFLFFFSHLLLVPFFFFLTLLFHFPVFNNISLNFYIQ.

2 helical membrane-spanning segments follow: residues 35–55 (LWTM…LIII) and 66–86 (FLFF…TLLF).

It is found in the membrane. This is an uncharacterized protein from Saccharomyces cerevisiae (strain ATCC 204508 / S288c) (Baker's yeast).